A 327-amino-acid polypeptide reads, in one-letter code: GMP reductase (327 aa).

Cysteine 176 acts as the Thioimidate intermediate in catalysis. 205 to 228 provides a ligand contact to NADP(+); that stretch reads IIADGGIRTHGDIAKSIRFGASMV.

The protein belongs to the IMPDH/GMPR family. GuaC type 2 subfamily.

It carries out the reaction IMP + NH4(+) + NADP(+) = GMP + NADPH + 2 H(+). Functionally, catalyzes the irreversible NADPH-dependent deamination of GMP to IMP. It functions in the conversion of nucleobase, nucleoside and nucleotide derivatives of G to A nucleotides, and in maintaining the intracellular balance of A and G nucleotides. In Streptococcus pyogenes serotype M6 (strain ATCC BAA-946 / MGAS10394), this protein is GMP reductase.